Reading from the N-terminus, the 248-residue chain is 14-3-3 protein sigma (248 aa).

Serine 5, serine 74, and serine 248 each carry phosphoserine.

The protein belongs to the 14-3-3 family. In terms of assembly, homodimer. Interacts with KRT17 and SAMSN1. Found in a complex with XPO7, EIF4A1, ARHGAP1, VPS26A, VPS29 and VPS35. Interacts with GAB2. Interacts with SRPK2. Interacts with COPS6. Interacts with COP1; this interaction leads to proteasomal degradation. Interacts with the 'Thr-369' phosphorylated form of DAPK2. Interacts with PI4KB. Interacts with SLITRK1. Interacts with LRRK2; this interaction is dependent on LRRK2 phosphorylation. Interacts with PKP3 (via N-terminus); the interaction maintains the cytoplasmic pool of PKP3, facilitates PKP3 exchange at desmosomes and restricts PKP3 localization to existing desmosome cell junctions. Interacts with LCP2. In terms of processing, ubiquitinated. Ubiquitination by RFFL induces proteasomal degradation and indirectly regulates p53/TP53 activation. In terms of tissue distribution, expressed in dorsal skin (at protein level). Expressed in the basal layer of skin epithelium and in outer root sheath of hair follicle.

The protein resides in the cytoplasm. It is found in the nucleus. It localises to the secreted. Its function is as follows. Adapter protein implicated in the regulation of a large spectrum of both general and specialized signaling pathways. Binds to a large number of partners, usually by recognition of a phosphoserine or phosphothreonine motif. Binding generally results in the modulation of the activity of the binding partner. Promotes cytosolic retention of GBP1 GTPase by binding to phosphorylated GBP1, thereby inhibiting the innate immune response. Also acts as a TP53/p53-regulated inhibitor of G2/M progression. When bound to KRT17, regulates protein synthesis and epithelial cell growth by stimulating Akt/mTOR pathway. Acts to maintain desmosome cell junction adhesion in epithelial cells via interacting with and sequestering PKP3 to the cytoplasm, thereby restricting its translocation to existing desmosome structures and therefore maintaining desmosome protein homeostasis. Also acts to facilitate PKP3 exchange at desmosome plaques, thereby maintaining keratinocyte intercellular adhesion. May also regulate MDM2 autoubiquitination and degradation and thereby activate p53/TP53. The protein is 14-3-3 protein sigma (Sfn) of Mus musculus (Mouse).